A 436-amino-acid polypeptide reads, in one-letter code: GTPase Obg (436 aa).

The 159-residue stretch at 2-160 folds into the Obg domain; that stretch reads SMFLDTAKIQ…RELLLELKVL (159 aa). The 178-residue stretch at 161-338 folds into the OBG-type G domain; the sequence is ADVGLVGFPS…LLDATAELLD (178 aa). GTP-binding positions include 167 to 174, 192 to 196, 214 to 217, 284 to 287, and 319 to 321; these read GFPSVGKS, FTTIV, DLPG, NKMD, and SSL. Ser174 and Thr194 together coordinate Mg(2+). Residues 358–436 form the OCT domain; the sequence is GFDEEAPAFE…IGKFEFEFVD (79 aa).

This sequence belongs to the TRAFAC class OBG-HflX-like GTPase superfamily. OBG GTPase family. As to quaternary structure, monomer. The cofactor is Mg(2+).

The protein localises to the cytoplasm. In terms of biological role, an essential GTPase which binds GTP, GDP and possibly (p)ppGpp with moderate affinity, with high nucleotide exchange rates and a fairly low GTP hydrolysis rate. Plays a role in control of the cell cycle, stress response, ribosome biogenesis and in those bacteria that undergo differentiation, in morphogenesis control. In Streptococcus sanguinis (strain SK36), this protein is GTPase Obg.